The sequence spans 74 residues: DNA-directed RNA polymerase subunit omega (74 aa).

It belongs to the RNA polymerase subunit omega family. In terms of assembly, the RNAP catalytic core consists of 2 alpha, 1 beta, 1 beta' and 1 omega subunit. When a sigma factor is associated with the core the holoenzyme is formed, which can initiate transcription.

It catalyses the reaction RNA(n) + a ribonucleoside 5'-triphosphate = RNA(n+1) + diphosphate. In terms of biological role, promotes RNA polymerase assembly. Latches the N- and C-terminal regions of the beta' subunit thereby facilitating its interaction with the beta and alpha subunits. The protein is DNA-directed RNA polymerase subunit omega of Helicobacter acinonychis (strain Sheeba).